A 121-amino-acid polypeptide reads, in one-letter code: uncharacterized protein (121 aa).

The next 3 membrane-spanning stretches (helical) occupy residues 1-21 (MILW…IMPV), 55-75 (LKYI…FCSI), and 92-112 (LFFK…IHFL).

The protein resides in the membrane. This is an uncharacterized protein from Saccharomyces cerevisiae (strain ATCC 204508 / S288c) (Baker's yeast).